The primary structure comprises 287 residues: ATP synthase gamma chain (287 aa).

Belongs to the ATPase gamma chain family. As to quaternary structure, F-type ATPases have 2 components, CF(1) - the catalytic core - and CF(0) - the membrane proton channel. CF(1) has five subunits: alpha(3), beta(3), gamma(1), delta(1), epsilon(1). CF(0) has three main subunits: a, b and c.

Its subcellular location is the cell membrane. Produces ATP from ADP in the presence of a proton gradient across the membrane. The gamma chain is believed to be important in regulating ATPase activity and the flow of protons through the CF(0) complex. In Bacillus velezensis (strain DSM 23117 / BGSC 10A6 / LMG 26770 / FZB42) (Bacillus amyloliquefaciens subsp. plantarum), this protein is ATP synthase gamma chain.